The primary structure comprises 329 residues: uncharacterized protein (329 aa).

The SIS domain maps to 38–184 (IVKLILKSQE…MACLMRAKNF (147 aa)). 56 to 61 (GVGKSA) provides a ligand contact to ATP. CBS domains are found at residues 211-267 (QTTN…GLSL) and 276-329 (TLKP…GLKA).

It belongs to the SIS family. GutQ/KpsF subfamily.

This is an uncharacterized protein from Helicobacter pylori (strain J99 / ATCC 700824) (Campylobacter pylori J99).